The following is a 605-amino-acid chain: Glucose oxidase (605 aa).

The first 16 residues, 1 to 16 (MKTILSSSLVVSMAAA), serve as a signal peptide directing secretion. FAD-binding residues include Leu51 and Thr52. Asn65 carries an N-linked (GlcNAc...) asparagine glycan. Glu72 contributes to the FAD binding site. Residue Asn111 is glycosylated (N-linked (GlcNAc...) asparagine). Residues Ser125, Asn129, Gly130, and Thr132 each contribute to the FAD site. An intrachain disulfide couples Cys186 to Cys228. The N-linked (GlcNAc...) asparagine glycan is linked to Asn190. Val272 is an FAD binding site. Residues Asn280, Asn377, Asn410, and Asn495 are each glycosylated (N-linked (GlcNAc...) asparagine). His538 serves as the catalytic Proton acceptor. Residues Arg559 and Val560 each coordinate O2. FAD-binding residues include Gly571 and Met583.

The protein belongs to the GMC oxidoreductase family. Homodimer. It depends on FAD as a cofactor.

Its subcellular location is the secreted. The protein resides in the cell wall. It is found in the cytoplasm. The protein localises to the extracellular space. It localises to the extracellular matrix. It carries out the reaction beta-D-glucose + O2 = D-glucono-1,5-lactone + H2O2. Glucose oxidase catalyzes the oxidation of beta-D-glucose to D-glucono-delta-lactone and hydrogen peroxide in the presence of molecular oxygen. Acts as a critical factor modulating pathogenicity by controlling transcription of genes important for fungal secondary metabolism and infection such as those coding for enzymes involved in degradation of the host cell wall. The polypeptide is Glucose oxidase (Aspergillus carbonarius (strain ITEM 5010)).